A 334-amino-acid polypeptide reads, in one-letter code: Phosphate acyltransferase (334 aa).

Belongs to the PlsX family. As to quaternary structure, homodimer. Probably interacts with PlsY.

The protein localises to the cytoplasm. It carries out the reaction a fatty acyl-[ACP] + phosphate = an acyl phosphate + holo-[ACP]. It functions in the pathway lipid metabolism; phospholipid metabolism. Catalyzes the reversible formation of acyl-phosphate (acyl-PO(4)) from acyl-[acyl-carrier-protein] (acyl-ACP). This enzyme utilizes acyl-ACP as fatty acyl donor, but not acyl-CoA. The chain is Phosphate acyltransferase from Streptococcus thermophilus (strain ATCC BAA-491 / LMD-9).